The sequence spans 634 residues: Sodium-dependent multivitamin transporter (634 aa).

The next 12 helical transmembrane spans lie at 23–43 (FSVV…VIGL), 65–85 (MGCL…VAIL), 100–120 (FLGC…IPVF), 142–162 (ICGT…ALYA), 175–195 (LWLS…LGGL), 207–227 (LVMF…VGGL), 255–275 (FWTL…VNQA), 295–315 (AVFP…LVMF), 350–370 (LPGL…SSAF), 403–423 (FAYG…GSVL), 427–447 (LSIF…GLFF), and 455–475 (AIVG…GSIV). N-linked (GlcNAc...) asparagine glycosylation is found at N488 and N497. The chain crosses the membrane as a helical span at residues 526-546 (LWYSAHNSTTVIVVGLIVSLL).

This sequence belongs to the sodium:solute symporter (SSF) (TC 2.A.21) family. In terms of assembly, interacts with PDZD11. Expressed in the intestinal mucosa, liver and kidney (at protein level). Expressed in the colon.

The protein resides in the cell membrane. Its subcellular location is the apical cell membrane. The catalysed reaction is biotin(out) + 2 Na(+)(out) = biotin(in) + 2 Na(+)(in). It carries out the reaction (R)-pantothenate(out) + 2 Na(+)(out) = (R)-pantothenate(in) + 2 Na(+)(in). It catalyses the reaction (R)-lipoate(out) + 2 Na(+)(out) = (R)-lipoate(in) + 2 Na(+)(in). The enzyme catalyses iodide(out) + 2 Na(+)(out) = iodide(in) + 2 Na(+)(in). Sodium-dependent multivitamin transporter that mediates the electrogenic transport of pantothenate, biotin, lipoate and iodide. Functions as a Na(+)-coupled substrate symporter where the stoichiometry of Na(+):substrate is 2:1, creating an electrochemical Na(+) gradient used as driving force for substrate uptake. Required for biotin and pantothenate uptake in the intestine across the brush border membrane. Plays a role in the maintenance of intestinal mucosa integrity, by providing the gut mucosa with biotin. Contributes to the luminal uptake of biotin and pantothenate into the brain across the blood-brain barrier. In Mus musculus (Mouse), this protein is Sodium-dependent multivitamin transporter.